Here is a 156-residue protein sequence, read N- to C-terminus: Small ribosomal subunit protein uS7 (156 aa).

It belongs to the universal ribosomal protein uS7 family. As to quaternary structure, part of the 30S ribosomal subunit. Contacts proteins S9 and S11.

Functionally, one of the primary rRNA binding proteins, it binds directly to 16S rRNA where it nucleates assembly of the head domain of the 30S subunit. Is located at the subunit interface close to the decoding center, probably blocks exit of the E-site tRNA. This chain is Small ribosomal subunit protein uS7, found in Geotalea uraniireducens (strain Rf4) (Geobacter uraniireducens).